A 1024-amino-acid chain; its full sequence is Multidrug resistance protein MdtC (1024 aa).

The next 12 helical transmembrane spans lie at 12–32, 333–353, 360–380, 387–407, 435–455, 469–489, 528–548, 853–873, 875–895, 897–917, 953–973, and 984–1004; these read VATT…FSLL, EVER…FIFL, LIPA…MYLC, LSLM…IVVL, VLSM…MAGL, VAIG…CAWL, WVMV…ISIP, LWLI…LYES, VHPL…LLAL, LFDA…IGIV, PIIM…LSSG, and ITIV…TPVI.

Belongs to the resistance-nodulation-cell division (RND) (TC 2.A.6) family. MdtC subfamily. In terms of assembly, part of a tripartite efflux system composed of MdtA, MdtB and MdtC. MdtC forms a heteromultimer with MdtB.

It localises to the cell inner membrane. The sequence is that of Multidrug resistance protein MdtC from Yersinia pseudotuberculosis serotype IB (strain PB1/+).